Consider the following 77-residue polypeptide: Large ribosomal subunit protein bL28 (77 aa).

It belongs to the bacterial ribosomal protein bL28 family.

The polypeptide is Large ribosomal subunit protein bL28 (Ralstonia pickettii (strain 12J)).